We begin with the raw amino-acid sequence, 360 residues long: Lipid-A-disaccharide synthase (360 aa).

The protein belongs to the LpxB family.

The catalysed reaction is a lipid X + a UDP-2-N,3-O-bis[(3R)-3-hydroxyacyl]-alpha-D-glucosamine = a lipid A disaccharide + UDP + H(+). It functions in the pathway bacterial outer membrane biogenesis; LPS lipid A biosynthesis. Its function is as follows. Condensation of UDP-2,3-diacylglucosamine and 2,3-diacylglucosamine-1-phosphate to form lipid A disaccharide, a precursor of lipid A, a phosphorylated glycolipid that anchors the lipopolysaccharide to the outer membrane of the cell. In Helicobacter pylori (strain Shi470), this protein is Lipid-A-disaccharide synthase.